The sequence spans 141 residues: Nucleoside diphosphate kinase (141 aa).

Residues lysine 11, phenylalanine 59, arginine 87, threonine 93, arginine 104, and asparagine 114 each coordinate ATP. Histidine 117 functions as the Pros-phosphohistidine intermediate in the catalytic mechanism.

Belongs to the NDK family. In terms of assembly, homotetramer. Mg(2+) is required as a cofactor.

The protein resides in the cytoplasm. The enzyme catalyses a 2'-deoxyribonucleoside 5'-diphosphate + ATP = a 2'-deoxyribonucleoside 5'-triphosphate + ADP. It catalyses the reaction a ribonucleoside 5'-diphosphate + ATP = a ribonucleoside 5'-triphosphate + ADP. In terms of biological role, major role in the synthesis of nucleoside triphosphates other than ATP. The ATP gamma phosphate is transferred to the NDP beta phosphate via a ping-pong mechanism, using a phosphorylated active-site intermediate. This chain is Nucleoside diphosphate kinase, found in Mannheimia succiniciproducens (strain KCTC 0769BP / MBEL55E).